Consider the following 160-residue polypeptide: 6,7-dimethyl-8-ribityllumazine synthase (160 aa).

5-amino-6-(D-ribitylamino)uracil is bound by residues phenylalanine 22, 57 to 59 (AVE), and 81 to 83 (AVI). Position 86-87 (86-87 (GT)) interacts with (2S)-2-hydroxy-3-oxobutyl phosphate. The active-site Proton donor is histidine 89. Phenylalanine 114 is a 5-amino-6-(D-ribitylamino)uracil binding site. Arginine 128 serves as a coordination point for (2S)-2-hydroxy-3-oxobutyl phosphate.

It belongs to the DMRL synthase family. Forms an icosahedral capsid composed of 60 subunits, arranged as a dodecamer of pentamers.

The catalysed reaction is (2S)-2-hydroxy-3-oxobutyl phosphate + 5-amino-6-(D-ribitylamino)uracil = 6,7-dimethyl-8-(1-D-ribityl)lumazine + phosphate + 2 H2O + H(+). It participates in cofactor biosynthesis; riboflavin biosynthesis; riboflavin from 2-hydroxy-3-oxobutyl phosphate and 5-amino-6-(D-ribitylamino)uracil: step 1/2. Catalyzes the formation of 6,7-dimethyl-8-ribityllumazine by condensation of 5-amino-6-(D-ribitylamino)uracil with 3,4-dihydroxy-2-butanone 4-phosphate. This is the penultimate step in the biosynthesis of riboflavin. The polypeptide is 6,7-dimethyl-8-ribityllumazine synthase (Shewanella sediminis (strain HAW-EB3)).